The following is a 216-amino-acid chain: Adenylate kinase (216 aa).

Position 11-16 (Gly-11–Thr-16) interacts with ATP. The NMP stretch occupies residues Ala-31–Val-60. Residues Thr-32, Arg-37, Glu-58–Val-60, Gly-86–Arg-89, and Gln-93 contribute to the AMP site. The interval Gly-127 to Asp-163 is LID. Arg-128 contacts ATP. Cys-131, Cys-134, Cys-150, and Cys-153 together coordinate Zn(2+). Positions 160 and 171 each coordinate AMP. Ala-199 serves as a coordination point for ATP.

The protein belongs to the adenylate kinase family. As to quaternary structure, monomer.

The protein resides in the cytoplasm. The enzyme catalyses AMP + ATP = 2 ADP. Its pathway is purine metabolism; AMP biosynthesis via salvage pathway; AMP from ADP: step 1/1. Its function is as follows. Catalyzes the reversible transfer of the terminal phosphate group between ATP and AMP. Plays an important role in cellular energy homeostasis and in adenine nucleotide metabolism. The polypeptide is Adenylate kinase (Dehalococcoides mccartyi (strain CBDB1)).